We begin with the raw amino-acid sequence, 377 residues long: Prostaglandin E synthase 2 (377 aa).

Residues 1 to 57 (MDPAARVVRALWPGGCALAWRLGGRPQPLLPTQSRAGFAGAAGGPSPVAAARKGSPR) are Lumenal-facing. A helical transmembrane segment spans residues 58-74 (LLGAAALALGGALGLYH). Residues 75–377 (TARWHLRAQD…RAITEASPAH (303 aa)) lie on the Cytoplasmic side of the membrane. The Glutaredoxin domain occupies 90-193 (SAAQLSLSSR…EIITYYPAMK (104 aa)). Phosphoserine is present on S95. Glutathione contacts are provided by residues V148 and 164–165 (DS). The region spanning 263 to 377 (YIVREGKFGA…RAITEASPAH (115 aa)) is the GST C-terminal domain.

It belongs to the GST superfamily. As to quaternary structure, homodimer. May interact with CEBPB. Interacts with EXOSC10. Synthesized as a Golgi membrane-associated protein, and the proteolytic removal of the N-terminal hydrophobic domain leads to the formation of a mature cytosolic enzyme. In terms of tissue distribution, widely expressed. Expressed in the heart, including apex, inter-ventricular septum, both atria and ventricles, but not in the aorta. Also expressed in fetal heart. Detected in various regions of the brain: cerebellum; occipital, frontal and parietal lobes. Also expressed in the lymph nodes, skeletal muscle, kidney and trachea, but not in the thymus or lung. Overexpressed in colorectal cancer.

Its subcellular location is the golgi apparatus membrane. It is found in the cytoplasm. It localises to the perinuclear region. The catalysed reaction is prostaglandin H2 = prostaglandin E2. It catalyses the reaction prostaglandin H2 = (12S)-hydroxy-(5Z,8E,10E)-heptadecatrienoate + malonaldehyde. Its pathway is lipid metabolism; prostaglandin biosynthesis. With respect to regulation, isomerase activity is increased by sulfhydril compounds. Dithiothreitol (DTT) is most effective, followed by dihydrolipoic acid, glutathione (GSH) and 2-mercaptoethanol. In terms of biological role, isomerase that catalyzes the conversion of PGH2 into the more stable prostaglandin E2 (PGE2) (in vitro). The biological function and the GSH-dependent property of PTGES2 is still under debate. In vivo, PTGES2 could form a complex with GSH and heme and would not participate in PGE2 synthesis but would catalyze the degradation of prostaglandin E2 H2 (PGH2) to 12(S)-hydroxy-5(Z),8(E),10(E)-heptadecatrienoic acid (HHT) and malondialdehyde (MDA). This chain is Prostaglandin E synthase 2 (PTGES2), found in Homo sapiens (Human).